The sequence spans 205 residues: uncharacterized protein (205 aa).

An N-terminal signal peptide occupies residues 1–18 (MKASLALLSLLTAFTSHS).

This is an uncharacterized protein from Escherichia coli (strain K12).